The chain runs to 110 residues: U-scoloptoxin(16)-Er6a (110 aa).

A signal peptide spans M1 to G26.

This sequence belongs to the scoloptoxin-16 family. Post-translationally, contains 4 disulfide bonds. As to expression, expressed by the venom gland.

The protein localises to the secreted. The chain is U-scoloptoxin(16)-Er6a from Ethmostigmus rubripes (Giant centipede).